The following is a 744-amino-acid chain: Polyribonucleotide nucleotidyltransferase (744 aa).

The Mg(2+) site is built by Asp515 and Asp521. The KH domain occupies 581–640; that stretch reads PRVITVQVPVDKIGEVIGPKGKMINQIQDDTGADISIEDDGTVFIGATDGPSAEAARQAI. An S1 motif domain is found at 652-724; it reads GERFVGTVVK…PRGKLSLHAV (73 aa).

Belongs to the polyribonucleotide nucleotidyltransferase family. Requires Mg(2+) as cofactor.

It localises to the cytoplasm. It carries out the reaction RNA(n+1) + phosphate = RNA(n) + a ribonucleoside 5'-diphosphate. Involved in mRNA degradation. Catalyzes the phosphorolysis of single-stranded polyribonucleotides processively in the 3'- to 5'-direction. This chain is Polyribonucleotide nucleotidyltransferase, found in Beutenbergia cavernae (strain ATCC BAA-8 / DSM 12333 / CCUG 43141 / JCM 11478 / NBRC 16432 / NCIMB 13614 / HKI 0122).